A 378-amino-acid chain; its full sequence is D-alanine--D-alanine ligase (378 aa).

An ATP-grasp domain is found at 141 to 347 (KKLLTLNGIR…YSELIDQLIQ (207 aa)). An ATP-binding site is contributed by 171–226 (AEELGETLFVKPARQGSSVGIHKVRNEEEYNAALEDGFKYDYKILVEEAIKNPREV). Mg(2+) is bound by residues Asp-301, Glu-314, and Asn-316.

It belongs to the D-alanine--D-alanine ligase family. Mg(2+) is required as a cofactor. It depends on Mn(2+) as a cofactor.

It localises to the cytoplasm. The enzyme catalyses 2 D-alanine + ATP = D-alanyl-D-alanine + ADP + phosphate + H(+). It participates in cell wall biogenesis; peptidoglycan biosynthesis. Its function is as follows. Cell wall formation. In Ligilactobacillus salivarius (strain UCC118) (Lactobacillus salivarius), this protein is D-alanine--D-alanine ligase.